The following is a 517-amino-acid chain: Crotonobetaine/carnitine--CoA ligase (517 aa).

This sequence belongs to the ATP-dependent AMP-binding enzyme family.

It carries out the reaction 4-(trimethylamino)butanoate + ATP + CoA = 4-(trimethylamino)butanoyl-CoA + AMP + diphosphate. The catalysed reaction is crotonobetaine + ATP + CoA = crotonobetainyl-CoA + AMP + diphosphate. It catalyses the reaction (R)-carnitine + ATP + CoA = (R)-carnitinyl-CoA + AMP + diphosphate. The protein operates within amine and polyamine metabolism; carnitine metabolism. Its function is as follows. Catalyzes the transfer of CoA to carnitine, generating the initial carnitinyl-CoA needed for the CaiB reaction cycle. Also has activity toward crotonobetaine and gamma-butyrobetaine. This chain is Crotonobetaine/carnitine--CoA ligase, found in Escherichia coli O157:H7.